Consider the following 906-residue polypeptide: Ribonucleoside-diphosphate reductase large subunit-like protein (906 aa).

Disordered stretches follow at residues 1–70 (MNPA…AGNT) and 89–129 (VSWR…LSTF). A compositionally biased stretch (polar residues) spans 98-109 (PDGTPSVLSLTR).

The protein belongs to the ribonucleoside diphosphate reductase large chain family.

It localises to the virion. The protein resides in the host cytoplasm. Functionally, does not possess a ribonucleotide reductase activity. Betaherpesviruses probably use another strategy to expand the dNTP pool in a quiescent host cell. The protein is Ribonucleoside-diphosphate reductase large subunit-like protein of Human cytomegalovirus (strain AD169) (HHV-5).